Here is a 730-residue protein sequence, read N- to C-terminus: Ribosomal RNA large subunit methyltransferase K/L (730 aa).

Residues 46–157 (TAYRLCLWSR…RGEAILSLDL (112 aa)) form the THUMP domain. The span at 399–408 (AAVEEGEPRR) shows a compositional bias: basic and acidic residues. The tract at residues 399-418 (AAVEEGEPRRQAPVASEPAR) is disordered.

Belongs to the methyltransferase superfamily. RlmKL family.

The protein localises to the cytoplasm. It carries out the reaction guanosine(2445) in 23S rRNA + S-adenosyl-L-methionine = N(2)-methylguanosine(2445) in 23S rRNA + S-adenosyl-L-homocysteine + H(+). It catalyses the reaction guanosine(2069) in 23S rRNA + S-adenosyl-L-methionine = N(2)-methylguanosine(2069) in 23S rRNA + S-adenosyl-L-homocysteine + H(+). Its function is as follows. Specifically methylates the guanine in position 2445 (m2G2445) and the guanine in position 2069 (m7G2069) of 23S rRNA. In Pseudomonas entomophila (strain L48), this protein is Ribosomal RNA large subunit methyltransferase K/L.